Consider the following 48-residue polypeptide: uncharacterized protein (48 aa).

This is an uncharacterized protein from Schizosaccharomyces pombe (strain 972 / ATCC 24843) (Fission yeast).